We begin with the raw amino-acid sequence, 190 residues long: dTTP/UTP pyrophosphatase (190 aa).

The active-site Proton acceptor is the D71.

It belongs to the Maf family. YhdE subfamily. The cofactor is a divalent metal cation.

It is found in the cytoplasm. The catalysed reaction is dTTP + H2O = dTMP + diphosphate + H(+). The enzyme catalyses UTP + H2O = UMP + diphosphate + H(+). Its function is as follows. Nucleoside triphosphate pyrophosphatase that hydrolyzes dTTP and UTP. May have a dual role in cell division arrest and in preventing the incorporation of modified nucleotides into cellular nucleic acids. The chain is dTTP/UTP pyrophosphatase from Xanthomonas oryzae pv. oryzae (strain MAFF 311018).